The sequence spans 215 residues: Cytochrome b6 (215 aa).

The helical transmembrane segment at 32–52 threads the bilayer; that stretch reads IFYCLGGITLTCFLVQVATGF. Residue Cys35 participates in heme c binding. His86 and His100 together coordinate heme b. 3 consecutive transmembrane segments (helical) span residues 90-110, 116-136, and 186-206; these read ASMM…TGGF, LTWV…VTGY, and LHTF…FLMI. His187 and His202 together coordinate heme b.

It belongs to the cytochrome b family. PetB subfamily. As to quaternary structure, the 4 large subunits of the cytochrome b6-f complex are cytochrome b6, subunit IV (17 kDa polypeptide, PetD), cytochrome f and the Rieske protein, while the 4 small subunits are PetG, PetL, PetM and PetN. The complex functions as a dimer. The cofactor is heme b. It depends on heme c as a cofactor.

The protein resides in the plastid. Its subcellular location is the chloroplast thylakoid membrane. Component of the cytochrome b6-f complex, which mediates electron transfer between photosystem II (PSII) and photosystem I (PSI), cyclic electron flow around PSI, and state transitions. The chain is Cytochrome b6 from Ostreococcus tauri.